The chain runs to 116 residues: Large ribosomal subunit protein uL22 (116 aa).

This sequence belongs to the universal ribosomal protein uL22 family. Part of the 50S ribosomal subunit.

This protein binds specifically to 23S rRNA; its binding is stimulated by other ribosomal proteins, e.g. L4, L17, and L20. It is important during the early stages of 50S assembly. It makes multiple contacts with different domains of the 23S rRNA in the assembled 50S subunit and ribosome. Functionally, the globular domain of the protein is located near the polypeptide exit tunnel on the outside of the subunit, while an extended beta-hairpin is found that lines the wall of the exit tunnel in the center of the 70S ribosome. The polypeptide is Large ribosomal subunit protein uL22 (Gloeobacter violaceus (strain ATCC 29082 / PCC 7421)).